The sequence spans 285 residues: 4-hydroxybenzoate octaprenyltransferase (285 aa).

7 consecutive transmembrane segments (helical) span residues 20–39 (GSYL…AQGL), 92–112 (ALGL…ALNW), 137–157 (FPQV…FMAV), 159–179 (EAVP…TVAY), 206–226 (YDRL…LGMG), 228–248 (YLGF…LFIH), and 260–280 (ACFS…LGIA).

This sequence belongs to the UbiA prenyltransferase family. Requires Mg(2+) as cofactor.

It localises to the cell inner membrane. The enzyme catalyses all-trans-octaprenyl diphosphate + 4-hydroxybenzoate = 4-hydroxy-3-(all-trans-octaprenyl)benzoate + diphosphate. It participates in cofactor biosynthesis; ubiquinone biosynthesis. Catalyzes the prenylation of para-hydroxybenzoate (PHB) with an all-trans polyprenyl group. Mediates the second step in the final reaction sequence of ubiquinone-8 (UQ-8) biosynthesis, which is the condensation of the polyisoprenoid side chain with PHB, generating the first membrane-bound Q intermediate 3-octaprenyl-4-hydroxybenzoate. The chain is 4-hydroxybenzoate octaprenyltransferase from Pseudoalteromonas atlantica (strain T6c / ATCC BAA-1087).